The sequence spans 501 residues: Ribose import ATP-binding protein RbsA (501 aa).

2 ABC transporter domains span residues 6–242 (LQLS…VGRK) and 253–495 (VHGQ…VGKK). 38 to 45 (GENGAGKS) lines the ATP pocket.

This sequence belongs to the ABC transporter superfamily. Ribose importer (TC 3.A.1.2.1) family. As to quaternary structure, the complex is composed of an ATP-binding protein (RbsA), two transmembrane proteins (RbsC) and a solute-binding protein (RbsB).

It is found in the cell inner membrane. The enzyme catalyses D-ribose(out) + ATP + H2O = D-ribose(in) + ADP + phosphate + H(+). Part of the ABC transporter complex RbsABC involved in ribose import. Responsible for energy coupling to the transport system. In Vibrio vulnificus (strain YJ016), this protein is Ribose import ATP-binding protein RbsA.